We begin with the raw amino-acid sequence, 161 residues long: Mediator of RNA polymerase II transcription subunit 10 (161 aa).

Belongs to the Mediator complex subunit 10 family. Component of the Mediator complex.

Its subcellular location is the nucleus. Functionally, component of the Mediator complex, a coactivator involved in the regulated transcription of nearly all RNA polymerase II-dependent genes. Mediator functions as a bridge to convey information from gene-specific regulatory proteins to the basal RNA polymerase II transcription machinery. Mediator is recruited to promoters by direct interactions with regulatory proteins and serves as a scaffold for the assembly of a functional preinitiation complex with RNA polymerase II and the general transcription factors. This chain is Mediator of RNA polymerase II transcription subunit 10 (NUT2), found in Kluyveromyces lactis (strain ATCC 8585 / CBS 2359 / DSM 70799 / NBRC 1267 / NRRL Y-1140 / WM37) (Yeast).